Here is a 240-residue protein sequence, read N- to C-terminus: Probable transcriptional regulatory protein MS53_0373 (240 aa).

This sequence belongs to the TACO1 family.

It is found in the cytoplasm. This Mycoplasmopsis synoviae (strain 53) (Mycoplasma synoviae) protein is Probable transcriptional regulatory protein MS53_0373.